The primary structure comprises 861 residues: ToMV resistance protein Tm-2(GCR236) (861 aa).

Positions 63–83 (VKNLLKDIQELAGDVEDLLDD) form a coiled coil. One can recognise an NB-ARC domain in the interval 162–388 (DDFNMLQAKL…LESMGHKVQD (227 aa)). Position 185–192 (185–192 (GMPGLGKT)) interacts with ATP. 13 LRR repeats span residues 225 to 248 (LDIA…NLRS), 305 to 327 (LHAL…IFNF), 388 to 411 (DGCA…CFLY), 449 to 472 (LAED…TYNG), 510 to 536 (VARL…KLEK), 585 to 608 (MTCL…IVKL), 609 to 631 (TRLE…VWES), 652 to 680 (ISSF…FFEP), 689 to 710 (LRKL…IFSP), 712 to 735 (LKAL…LSSY), 736 to 758 (PHIA…SFPP), 784 to 810 (LRKL…GYSF), and 811 to 835 (PQLE…DVSM).

The protein belongs to the disease resistance NB-LRR family. As to quaternary structure, (Microbial infection) Interacts with tobamoviruses mouvement protein at the plasma membrane; this interaction triggers defense responses leading to programmed cell death. Binds to HSP90 proteins; this interaction seems required for defense responses toward tobamoviruses.

It is found in the cell membrane. In terms of biological role, inhibitor of viral mouvements which confers resistance to some tobamoviruses including tomato mosaic virus (ToMV) (e.g. isolates L, W3 and SL-1) and tobacco mosaic virus (TMV), but not to resistance-breaking isolates (e.g. B7, LT1, LII, Ltbl, ToMV2, and ToMV1-2) ToMV and tomato brown rugose fruit virus (ToBRFV). Elicits a hypersensitive reaction in response to avirulent (Avr) movement proteins from resistance inducing tobamoviruses (e.g. ToMV and TMV) strains, thus leading to programmed cell death. The sequence is that of ToMV resistance protein Tm-2(GCR236) from Solanum lycopersicum (Tomato).